The chain runs to 174 residues: Small ribosomal subunit protein uS5 (174 aa).

The 64-residue stretch at 18-81 folds into the S5 DRBM domain; the sequence is LKDRLVSVNR…EDAKKNLVKI (64 aa).

It belongs to the universal ribosomal protein uS5 family. Part of the 30S ribosomal subunit. Contacts proteins S4 and S8.

Its function is as follows. With S4 and S12 plays an important role in translational accuracy. Functionally, located at the back of the 30S subunit body where it stabilizes the conformation of the head with respect to the body. The polypeptide is Small ribosomal subunit protein uS5 (Flavobacterium psychrophilum (strain ATCC 49511 / DSM 21280 / CIP 103535 / JIP02/86)).